The chain runs to 89 residues: UPF0335 protein CCNA_03428 (89 aa).

It belongs to the UPF0335 family.

The sequence is that of UPF0335 protein CCNA_03428 from Caulobacter vibrioides (strain NA1000 / CB15N) (Caulobacter crescentus).